The chain runs to 335 residues: Foldase protein PrsA (335 aa).

The N-terminal stretch at 1–22 is a signal peptide; that stretch reads MRSAKKLLSVLCLGVFILTFTA. Residue Cys-23 is the site of N-palmitoyl cysteine attachment. Cys-23 carries S-diacylglycerol cysteine lipidation. Residues 194 to 285 enclose the PpiC domain; the sequence is PNTMNVSHIL…FGYHIIKINS (92 aa).

It belongs to the PrsA family.

It localises to the cell membrane. It carries out the reaction [protein]-peptidylproline (omega=180) = [protein]-peptidylproline (omega=0). Its function is as follows. Plays a major role in protein secretion by helping the post-translocational extracellular folding of several secreted proteins. The polypeptide is Foldase protein PrsA (Clostridium botulinum (strain Loch Maree / Type A3)).